The following is a 184-amino-acid chain: Protein FAM89A (184 aa).

The segment at 148 to 184 (YFQEQNSLHDRRDRGPPRDLSLPVSSLSSSDWILESI) is disordered. The span at 154 to 164 (SLHDRRDRGPP) shows a compositional bias: basic and acidic residues. Over residues 167–184 (LSLPVSSLSSSDWILESI) the composition is skewed to low complexity.

It belongs to the FAM89 family.

The chain is Protein FAM89A (FAM89A) from Homo sapiens (Human).